A 593-amino-acid chain; its full sequence is MSRPSSRAIYLHRKEYSQNLTSEPTLLQHRVEHLMTCKQGSQRVQGPEDALQKLFEMDAQGRVWSQDLILQVRDGWLQLLDIETKEELDSYRLDSIQAMNVALNTCSYNSILSITVQEPGLPGTSTLLFQCQEVGAERLKTSLQKALEEELEQRPRLGGLQPGQDRWRGPAMERPLPMEQARYLEPGIPPEQPHQRTLEHSLPPSPRPLPRHTSAREPSAFTLPPPRRSSSPEDPERDEEVLNHVLRDIELFMGKLEKAQAKTSRKKKFGKKNKDQGGLTQAQYIDCFQKIKHSFNLLGRLATWLKETSAPELVHILFKSLNFILARCPEAGLAAQVISPLLTPKAINLLQSCLSPPESNLWMGLGPAWTTSRADWTGDEPLPYQPTFSDDWQLPEPSSQAPLGYQDPVSLRRGSHRLGSTSHFPQEKTHNHDPQPGDPNSRPSSPKPAQPALKMQVLYEFEARNPRELTVVQGEKLEVLDHSKRWWLVKNEAGRSGYIPSNILEPLQPGTPGTQGQSPSRVPMLRLSSRPEEVTDWLQAENFSTATVRTLGSLTGSQLLRIRPGELQMLCPQEAPRILSRLEAVRRMLGISP.

A PTB domain is found at 28 to 155 (QHRVEHLMTC…ALEEELEQRP (128 aa)). Disordered regions lie at residues 149–171 (EELEQRPRLGGLQPGQDRWRGPA), 184–239 (LEPG…ERDE), and 374–451 (ADWT…PAQP). At Ser-231 the chain carries Phosphoserine. The span at 386-401 (PTFSDDWQLPEPSSQA) shows a compositional bias: polar residues. A compositionally biased stretch (basic and acidic residues) spans 425-435 (PQEKTHNHDPQ). The SH3 domain maps to 450–509 (QPALKMQVLYEFEARNPRELTVVQGEKLEVLDHSKRWWLVKNEAGRSGYIPSNILEPLQP).

The protein belongs to the EPS8 family. In terms of assembly, interacts with ABI1. Part of a complex that contains SOS1, ABI1 and EPS8L2. Interacts with FASLG.

The protein resides in the cytoplasm. This is Epidermal growth factor receptor kinase substrate 8-like protein 3 (EPS8L3) from Homo sapiens (Human).